Consider the following 144-residue polypeptide: Protein CT_635 (144 aa).

The tract at residues 110-144 (EVTNDIGHSSHKSPTPKKTKSSSQKKSKKKNWIPL) is disordered. Basic residues predominate over residues 118 to 144 (SSHKSPTPKKTKSSSQKKSKKKNWIPL).

This sequence belongs to the chlamydial CPn_0742/CT_635/TC_0003 family.

This Chlamydia trachomatis serovar D (strain ATCC VR-885 / DSM 19411 / UW-3/Cx) protein is Protein CT_635.